Reading from the N-terminus, the 486-residue chain is Cardiolipin synthase A (486 aa).

Transmembrane regions (helical) follow at residues 3-23 (TFYT…IAGV) and 38-58 (MAWL…YLSF). PLD phosphodiesterase domains are found at residues 219 to 246 (MDLR…VDPR) and 399 to 426 (EGGL…DMRS). Residues His224, Lys226, Asp231, His404, Lys406, and Asp411 contribute to the active site.

Belongs to the phospholipase D family. Cardiolipin synthase subfamily. ClsA sub-subfamily.

Its subcellular location is the cell inner membrane. The enzyme catalyses 2 a 1,2-diacyl-sn-glycero-3-phospho-(1'-sn-glycerol) = a cardiolipin + glycerol. In terms of biological role, catalyzes the reversible phosphatidyl group transfer from one phosphatidylglycerol molecule to another to form cardiolipin (CL) (diphosphatidylglycerol) and glycerol. This chain is Cardiolipin synthase A, found in Klebsiella pneumoniae subsp. pneumoniae (strain ATCC 700721 / MGH 78578).